A 318-amino-acid polypeptide reads, in one-letter code: Transcription factor zip-4 (318 aa).

A compositionally biased stretch (polar residues) spans 1 to 13; it reads MYNYNYSRGNKSM. Disordered regions lie at residues 1-20, 147-205, 238-257, and 273-318; these read MYNYNYSRGNKSMGNPPRFH, EKKP…TAAA, NNDAVRKSRNKAKELQLQKD, and ELQS…KSNY. The segment covering 173–190 has biased composition (acidic residues); that stretch reads DYQEEGETSLSDNDESVD. Positions 228-291 constitute a bZIP domain; it reads EPIYKLKRAR…ERDQQLIKQL (64 aa). The interval 232 to 266 is basic motif; sequence KLKRARNNDAVRKSRNKAKELQLQKDEEYDEMKKR. Positions 242-280 form a coiled coil; sequence VRKSRNKAKELQLQKDEEYDEMKKRITQLEAELQSEREG. Positions 267 to 274 are leucine-zipper; the sequence is ITQLEAEL. The span at 275–298 shows a compositional bias: basic and acidic residues; sequence QSEREGRERDQQLIKQLIREKEST. Residues 307–318 show a composition bias toward polar residues; sequence RNALESFNKSNY.

Belongs to the bZIP family. C/EBP subfamily.

It is found in the nucleus. Transcription factor that binds to the promoter and the enhancer regions of target genes. Involved in responding to mitochondrial damage. Has a protective role in response to infection by the Gram-negative bacterium P.aeruginosa. This chain is Transcription factor zip-4, found in Caenorhabditis elegans.